We begin with the raw amino-acid sequence, 93 residues long: MPLHKSAEKRLRQSEKRNARNRARKKELKVLVKTMQKLIEASAAKPEVETAYRSVVQKLDRLGVKRYIHANKASRKKSQITRDFNTYMQSAQQ.

Residues 1-18 (MPLHKSAEKRLRQSEKRN) are compositionally biased toward basic and acidic residues. Residues 1–25 (MPLHKSAEKRLRQSEKRNARNRARK) are disordered.

The protein belongs to the bacterial ribosomal protein bS20 family.

Binds directly to 16S ribosomal RNA. The chain is Small ribosomal subunit protein bS20 from Chlorobium chlorochromatii (strain CaD3).